A 470-amino-acid chain; its full sequence is Neuraminidase (470 aa).

Topologically, residues 1–14 (MNPNQKIITIGSIS) are intravirion. The involved in apical transport and lipid raft association stretch occupies residues 11-32 (GSISLGLVVFNVLLHVVSIIVT). A helical membrane pass occupies residues 15 to 35 (LGLVVFNVLLHVVSIIVTVLI). The segment at 32 to 86 (TVLILGRGGNNGICNETVVREYNETVRIEKVTQWHNTSVVEYMPYWNEGTYMNNT) is hypervariable stalk region. Residues 36 to 470 (LGRGGNNGIC…AILPFDIDKM (435 aa)) are Virion surface-facing. Residues Asn46, Asn54, Asn67, and Asn84 are each glycosylated (N-linked (GlcNAc...) asparagine; by host). Residues 89-470 (ICDVKGFAPF…AILPFDIDKM (382 aa)) are head of neuraminidase. Intrachain disulfides connect Cys90-Cys417, Cys122-Cys127, Cys182-Cys229, Cys231-Cys236, Cys277-Cys290, Cys279-Cys288, Cys316-Cys335, and Cys421-Cys446. Arg116 provides a ligand contact to substrate. Asn144 carries an N-linked (GlcNAc...) asparagine; by host glycan. The active-site Proton donor/acceptor is the Asp149. Arg150 serves as a coordination point for substrate. Residue 275–276 (EE) coordinates substrate. Residue Arg291 participates in substrate binding. Asp292 serves as a coordination point for Ca(2+). N-linked (GlcNAc...) asparagine; by host glycosylation is present at Asn293. Ca(2+)-binding residues include Gly296 and Asp322. Arg368 contributes to the substrate binding site. Asn398 carries an N-linked (GlcNAc...) asparagine; by host glycan. Tyr402 (nucleophile) is an active-site residue.

Belongs to the glycosyl hydrolase 34 family. In terms of assembly, homotetramer. Ca(2+) is required as a cofactor. In terms of processing, N-glycosylated.

The protein resides in the virion membrane. It localises to the host apical cell membrane. It catalyses the reaction Hydrolysis of alpha-(2-&gt;3)-, alpha-(2-&gt;6)-, alpha-(2-&gt;8)- glycosidic linkages of terminal sialic acid residues in oligosaccharides, glycoproteins, glycolipids, colominic acid and synthetic substrates.. Its activity is regulated as follows. Inhibited by the neuraminidase inhibitors zanamivir (Relenza) and oseltamivir (Tamiflu). These drugs interfere with the release of progeny virus from infected cells and are effective against all influenza strains. Resistance to neuraminidase inhibitors is quite rare. Functionally, catalyzes the removal of terminal sialic acid residues from viral and cellular glycoconjugates. Cleaves off the terminal sialic acids on the glycosylated HA during virus budding to facilitate virus release. Additionally helps virus spread through the circulation by further removing sialic acids from the cell surface. These cleavages prevent self-aggregation and ensure the efficient spread of the progeny virus from cell to cell. Otherwise, infection would be limited to one round of replication. Described as a receptor-destroying enzyme because it cleaves a terminal sialic acid from the cellular receptors. May facilitate viral invasion of the upper airways by cleaving the sialic acid moieties on the mucin of the airway epithelial cells. Likely to plays a role in the budding process through its association with lipid rafts during intracellular transport. May additionally display a raft-association independent effect on budding. Plays a role in the determination of host range restriction on replication and virulence. Sialidase activity in late endosome/lysosome traffic seems to enhance virus replication. In Aves (Horse), this protein is Neuraminidase.